The chain runs to 187 residues: Elongation factor P (187 aa).

It belongs to the elongation factor P family.

The protein resides in the cytoplasm. It functions in the pathway protein biosynthesis; polypeptide chain elongation. Involved in peptide bond synthesis. Stimulates efficient translation and peptide-bond synthesis on native or reconstituted 70S ribosomes in vitro. Probably functions indirectly by altering the affinity of the ribosome for aminoacyl-tRNA, thus increasing their reactivity as acceptors for peptidyl transferase. This chain is Elongation factor P, found in Zymomonas mobilis subsp. mobilis (strain ATCC 31821 / ZM4 / CP4).